The following is a 290-amino-acid chain: RxLR effector protein Avr4 (290 aa).

The first 24 residues, Met1–Ala24, serve as a signal peptide directing secretion. Residues Val33–Glu56 form a disordered region. Residues Asn36–Arg45 show a composition bias toward basic and acidic residues. Residues Arg42–Arg58 carry the RxLR-dEER motif. The tract at residues Lys118–Arg141 is W1 motif. A W2 motif region spans residues Gln151 to Phe174. The segment at Val224–Lys247 is W3 motif. N-linked (GlcNAc...) asparagine glycosylation occurs at Asn246. Positions Ala249 to Asp270 are y motif.

The protein belongs to the RxLR effector family.

Its subcellular location is the secreted. It is found in the host cytoplasm. It localises to the host nucleus. The protein localises to the host nucleolus. The protein resides in the host cytoskeleton. Its function is as follows. Secreted effector that acts as an elicitor of hypersensitive response (HR) specifically on plants carrying defense protein R4, through its interaction with this protein. In Phytophthora mirabilis, this protein is RxLR effector protein Avr4.